The chain runs to 371 residues: MASSDGKPGGIFDHHVQTAVCDSRAKYREGRRPRAVKVYTINLESQYLLIQGVPAVGAMKELVERFALYGAIEQYNALDEYPAEDFTEVYLIKFVKLQSARIAKKKMDEQSFFGGLLHVCYAPEFETVEETRKKLEERKAYISRVTKNQDYYVTKKKPVPEQKGTKDSRQDFHAHMPGFCTPALNTSPKNPSENSSPCLPYSCEFPLCYFASKSPCSPGEHTDKASDSCNSARNRGELQKHRDHSAFPPKLQMNTYKTSVPCSSVQEAIATSQAVGRFMPRTTQLQERKRRRDCDRELGTFLETNISSNEVLIGPKLPGIPTVDLQDDSLNTTANLIRSKLKEVTSSVPKPPEDNGEDVCTSHPRKQRRRI.

An RRM domain is found at 46-124 (QYLLIQGVPA…GLLHVCYAPE (79 aa)). Disordered stretches follow at residues 220 to 249 (EHTD…AFPP) and 343 to 371 (EVTS…RRRI).

This sequence belongs to the RBM48 family. As to quaternary structure, component of the minor spliceosome. Within this complex, interacts with ARMC7 and PRPF8/PRP8.

Its function is as follows. As a component of the minor spliceosome, involved in the splicing of U12-type introns in pre-mRNAs. In Rattus norvegicus (Rat), this protein is RNA-binding protein 48 (Rbm48).